The primary structure comprises 102 residues: Small ribosomal subunit protein uS10 (102 aa).

This sequence belongs to the universal ribosomal protein uS10 family. Part of the 30S ribosomal subunit.

Functionally, involved in the binding of tRNA to the ribosomes. The chain is Small ribosomal subunit protein uS10 from Thermotoga maritima (strain ATCC 43589 / DSM 3109 / JCM 10099 / NBRC 100826 / MSB8).